The chain runs to 343 residues: Fructose-1,6-bisphosphatase class 1 (343 aa).

Glutamate 99, aspartate 121, leucine 123, and aspartate 124 together coordinate Mg(2+). Substrate contacts are provided by residues 124 to 127, asparagine 218, tyrosine 250, and lysine 283; that span reads DGSS. Glutamate 289 is a binding site for Mg(2+).

The protein belongs to the FBPase class 1 family. In terms of assembly, homotetramer. Requires Mg(2+) as cofactor.

Its subcellular location is the cytoplasm. The catalysed reaction is beta-D-fructose 1,6-bisphosphate + H2O = beta-D-fructose 6-phosphate + phosphate. It participates in carbohydrate biosynthesis; gluconeogenesis. In Leptospira biflexa serovar Patoc (strain Patoc 1 / Ames), this protein is Fructose-1,6-bisphosphatase class 1.